A 427-amino-acid chain; its full sequence is MGPSHIPPLTYKVVAECSVSKARAGLMTLRHSEVNTPVFMPVGTQGTLKGIVPDQLIELNCQILLGNTYHLGLRPGIETLKKAGGLHKFMGWPRAILTDSGGFQMVSLLQLAEIDEHGVNFRSPFDNSQCMLTPEHSIEIQNAIGGDIMMQLDDVVKTTTTGPRVEEAMERTIRWVDRCIEAHARDDDQSLFPIVQGGLDVPLRQRCVSALMERQVRGFAVGGLSGGESKHDFWRMVDVCTGYLPKDKPRYLMGVGFAADLVVCVALGIDMFDCVFPTRTARFGCALVDSGQLNLKQPKYKLDMEPIDKDCDCSTCRRYTRSYLHHIATNESVSSSLLSIHNVAYQLRLMRSMREAIQRDEFPQFVADFMARHFKAEPVPAWIREALSAVNIQLPADPERIDEQDQKPKTEKRRETEDVAEEQVASS.

Asp-99 serves as the catalytic Proton acceptor. Residues 99-103 (DSGGF), Asp-153, Gln-196, and Gly-223 contribute to the substrate site. Positions 254–260 (GVGFAAD) are RNA binding. Residue Asp-273 is the Nucleophile of the active site. The segment at 278–282 (TRTAR) is RNA binding; important for wobble base 34 recognition. Zn(2+) is bound by residues Cys-311, Cys-313, Cys-316, and His-341. Residues 395-427 (PADPERIDEQDQKPKTEKRRETEDVAEEQVASS) form a disordered region. Over residues 397 to 417 (DPERIDEQDQKPKTEKRRETE) the composition is skewed to basic and acidic residues.

Belongs to the queuine tRNA-ribosyltransferase family. As to quaternary structure, heterodimer of a catalytic subunit and an accessory subunit. It depends on Zn(2+) as a cofactor.

Its subcellular location is the cytoplasm. It catalyses the reaction guanosine(34) in tRNA + queuine = queuosine(34) in tRNA + guanine. Functionally, catalytic subunit of the queuine tRNA-ribosyltransferase (TGT) that catalyzes the base-exchange of a guanine (G) residue with queuine (Q) at position 34 (anticodon wobble position) in tRNAs with GU(N) anticodons (tRNA-Asp, -Asn, -His and -Tyr), resulting in the hypermodified nucleoside queuosine (7-(((4,5-cis-dihydroxy-2-cyclopenten-1-yl)amino)methyl)-7-deazaguanosine). Catalysis occurs through a double-displacement mechanism. The nucleophile active site attacks the C1' of nucleotide 34 to detach the guanine base from the RNA, forming a covalent enzyme-RNA intermediate. The proton acceptor active site deprotonates the incoming queuine, allowing a nucleophilic attack on the C1' of the ribose to form the product. The polypeptide is Queuine tRNA-ribosyltransferase catalytic subunit (Tgt) (Drosophila melanogaster (Fruit fly)).